A 391-amino-acid polypeptide reads, in one-letter code: Arginine biosynthesis bifunctional protein ArgJ (391 aa).

Substrate-binding residues include Thr149, Lys172, Thr183, Glu263, Asn386, and Ser391. Catalysis depends on Thr183, which acts as the Nucleophile.

It belongs to the ArgJ family. As to quaternary structure, heterotetramer of two alpha and two beta chains.

The protein resides in the cytoplasm. The enzyme catalyses N(2)-acetyl-L-ornithine + L-glutamate = N-acetyl-L-glutamate + L-ornithine. It catalyses the reaction L-glutamate + acetyl-CoA = N-acetyl-L-glutamate + CoA + H(+). It functions in the pathway amino-acid biosynthesis; L-arginine biosynthesis; L-ornithine and N-acetyl-L-glutamate from L-glutamate and N(2)-acetyl-L-ornithine (cyclic): step 1/1. The protein operates within amino-acid biosynthesis; L-arginine biosynthesis; N(2)-acetyl-L-ornithine from L-glutamate: step 1/4. Catalyzes two activities which are involved in the cyclic version of arginine biosynthesis: the synthesis of N-acetylglutamate from glutamate and acetyl-CoA as the acetyl donor, and of ornithine by transacetylation between N(2)-acetylornithine and glutamate. The sequence is that of Arginine biosynthesis bifunctional protein ArgJ from Bifidobacterium longum (strain NCC 2705).